The chain runs to 3933 residues: Circularly permutated Ras protein 2 (3933 aa).

Residues 12 to 46 adopt a coiled-coil conformation; sequence VHEVKKQELESILLQQEQEKQAKEEKESIKDTDDK. Disordered stretches follow at residues 23-101, 136-189, 1022-1054, and 2817-2839; these read ILLQ…IEKK, DIRE…RKET, ITTTTTTTTTNNNNNNNEVGESTTPNLPITTTT, and NNNNNNNRYNTPVRNGNIGRPTR. Residues 28 to 62 show a composition bias toward basic and acidic residues; it reads EQEKQAKEEKESIKDTDDKPIEDTEHSTNNDKPIE. Residues 70 to 92 show a composition bias toward low complexity; sequence TPTTTTTTKPTDEASSSSNNNNN. The segment covering 136–145 has biased composition (basic and acidic residues); sequence DIREPTDKPF. Polar residues predominate over residues 146–156; it reads ENTSNIETTRQ. Positions 167 to 215 form a coiled coil; it reads KTEAERLEQEQKQKQYDENRKETDRKLELELERLKNKKEEVEQIRAYFQ. The span at 168 to 189 shows a compositional bias: basic and acidic residues; sequence TEAERLEQEQKQKQYDENRKET. Positions 2817–2826 are enriched in low complexity; the sequence is NNNNNNNRYN. GTP contacts are provided by residues 2853–2857, 2913–2916, and 2976–2983; these read DTAGQ, TKAD, and GDGGIGKS. Disordered regions lie at residues 3036 to 3086, 3107 to 3142, and 3733 to 3754; these read LQSA…LSSR, RKSSLVEEESKRQYDDDDESKSESSEYDDDDDQDYE, and VIEPSSNVDENSEKVETQPSSS. Over residues 3070-3086 the composition is skewed to low complexity; sequence PSSSSTRTSVSTSLSSR. A compositionally biased stretch (basic and acidic residues) spans 3107-3120; the sequence is RKSSLVEEESKRQY. The segment covering 3121–3141 has biased composition (acidic residues); that stretch reads DDDDESKSESSEYDDDDDQDY.

This sequence belongs to the small GTPase superfamily. CpRas family.

This Dictyostelium discoideum (Social amoeba) protein is Circularly permutated Ras protein 2 (cpras2).